A 258-amino-acid chain; its full sequence is Probable phthiotriol/phenolphthiotriol dimycocerosates methyltransferase 2 (258 aa).

Belongs to the methyltransferase superfamily. Phthiotriol/phenolphthiotriol dimycocerosates methyltransferase family.

Catalyzes the methylation of the lipid moiety of the intermediate compounds phthiotriol and glycosylated phenolphthiotriol dimycoserosates to form phthiocerol dimycocerosates (DIM A) and glycosylated phenolphthiocerol dimycocerosates (PGL). This is Probable phthiotriol/phenolphthiotriol dimycocerosates methyltransferase 2 from Mycobacterium ulcerans (strain Agy99).